The primary structure comprises 95 residues: Aspartyl/glutamyl-tRNA(Asn/Gln) amidotransferase subunit C (95 aa).

It belongs to the GatC family. Heterotrimer of A, B and C subunits.

The enzyme catalyses L-glutamyl-tRNA(Gln) + L-glutamine + ATP + H2O = L-glutaminyl-tRNA(Gln) + L-glutamate + ADP + phosphate + H(+). It catalyses the reaction L-aspartyl-tRNA(Asn) + L-glutamine + ATP + H2O = L-asparaginyl-tRNA(Asn) + L-glutamate + ADP + phosphate + 2 H(+). In terms of biological role, allows the formation of correctly charged Asn-tRNA(Asn) or Gln-tRNA(Gln) through the transamidation of misacylated Asp-tRNA(Asn) or Glu-tRNA(Gln) in organisms which lack either or both of asparaginyl-tRNA or glutaminyl-tRNA synthetases. The reaction takes place in the presence of glutamine and ATP through an activated phospho-Asp-tRNA(Asn) or phospho-Glu-tRNA(Gln). The sequence is that of Aspartyl/glutamyl-tRNA(Asn/Gln) amidotransferase subunit C from Rhizobium rhizogenes (strain K84 / ATCC BAA-868) (Agrobacterium radiobacter).